A 212-amino-acid polypeptide reads, in one-letter code: Uridine kinase (212 aa).

13 to 20 (GASASGKS) provides a ligand contact to ATP.

Belongs to the uridine kinase family.

It is found in the cytoplasm. It carries out the reaction uridine + ATP = UMP + ADP + H(+). The enzyme catalyses cytidine + ATP = CMP + ADP + H(+). Its pathway is pyrimidine metabolism; CTP biosynthesis via salvage pathway; CTP from cytidine: step 1/3. The protein operates within pyrimidine metabolism; UMP biosynthesis via salvage pathway; UMP from uridine: step 1/1. This is Uridine kinase from Psychromonas ingrahamii (strain DSM 17664 / CCUG 51855 / 37).